The following is a 273-amino-acid chain: Large ribosomal subunit protein uL2 (273 aa).

The tract at residues 213–261 (WLGKRPQSRGVAMNPVDHPHGGGEGKSSGGRHPVTPWGVPTKGYKTRVN) is disordered.

This sequence belongs to the universal ribosomal protein uL2 family. In terms of assembly, part of the 50S ribosomal subunit. Forms a bridge to the 30S subunit in the 70S ribosome.

Functionally, one of the primary rRNA binding proteins. Required for association of the 30S and 50S subunits to form the 70S ribosome, for tRNA binding and peptide bond formation. It has been suggested to have peptidyltransferase activity; this is somewhat controversial. Makes several contacts with the 16S rRNA in the 70S ribosome. This chain is Large ribosomal subunit protein uL2, found in Syntrophotalea carbinolica (strain DSM 2380 / NBRC 103641 / GraBd1) (Pelobacter carbinolicus).